The following is a 359-amino-acid chain: Guanine nucleotide-binding protein subunit alpha-11 (359 aa).

Residues cysteine 9 and cysteine 10 are each lipidated (S-palmitoyl cysteine). Residues 38–359 enclose the G-alpha domain; sequence RELKLLLLGT…QLNLKEYNLV (322 aa). The tract at residues 41 to 54 is G1 motif; that stretch reads KLLLLGTGESGKST. GTP-binding positions include 46–53 and 180–183; these read GTGESGKS and LRVR. Residue serine 53 coordinates Mg(2+). Residues 178–186 form a G2 motif region; that stretch reads DVLRVRVPT. Threonine 186 serves as a coordination point for Mg(2+). Residues 201 to 210 form a G3 motif region; sequence FRMVDVGGQR. Glutamine 209 carries the post-translational modification Deamidated glutamine; by Photorhabdus PAU_02230. The interval 270-277 is G4 motif; it reads ILFLNKKD. Residues 274-277 and alanine 331 each bind GTP; that span reads NKKD. The G5 motif stretch occupies residues 329 to 334; that stretch reads TCATDT.

This sequence belongs to the G-alpha family. G(q) subfamily. As to quaternary structure, g proteins are composed of 3 units; alpha, beta and gamma. The alpha chain contains the guanine nucleotide binding site. Interacts with RGS22. Interacts with NTSR1. (Microbial infection) Interacts with human cytomegalovirus (HHV-5) US28. In terms of processing, (Microbial infection) Deamidated at Gln-209 by Photorhabdus asymbiotica toxin PAU_02230, blocking GTP hydrolysis of heterotrimeric GNAQ or GNA11 and G-alphai (GNAI1, GNAI2 or GNAI3) proteins, thereby activating RhoA. As to expression, expressed in testis.

The protein localises to the cell membrane. It is found in the cytoplasm. It catalyses the reaction GTP + H2O = GDP + phosphate + H(+). Its function is as follows. Guanine nucleotide-binding proteins (G proteins) function as transducers downstream of G protein-coupled receptors (GPCRs) in numerous signaling cascades. The alpha chain contains the guanine nucleotide binding site and alternates between an active, GTP-bound state and an inactive, GDP-bound state. Signaling by an activated GPCR promotes GDP release and GTP binding. The alpha subunit has a low GTPase activity that converts bound GTP to GDP, thereby terminating the signal. Both GDP release and GTP hydrolysis are modulated by numerous regulatory proteins. Signaling is mediated via phospholipase C-beta-dependent inositol lipid hydrolysis for signal propagation: activates phospholipase C-beta: following GPCR activation, GNA11 activates PLC-beta (PLCB1, PLCB2, PLCB3 or PLCB4), leading to production of diacylglycerol (DAG) and inositol 1,4,5-trisphosphate (IP3). Transduces FFAR4 signaling in response to long-chain fatty acids (LCFAs). Together with GNAQ, required for heart development. In the respiratory epithelium, transmits OXGR1-dependent signals that lead to downstream intracellular Ca(2+) release and mucocilliary clearance of airborne pathogens. This is Guanine nucleotide-binding protein subunit alpha-11 (GNA11) from Homo sapiens (Human).